The sequence spans 213 residues: Kynurenine formamidase (213 aa).

Tryptophan 18 lines the substrate pocket. Residues histidine 48, histidine 52, and aspartate 54 each coordinate Zn(2+). The Proton donor/acceptor role is filled by histidine 58. Residues histidine 160 and glutamate 172 each coordinate Zn(2+).

It belongs to the Cyclase 1 superfamily. KynB family. Homodimer. Requires Zn(2+) as cofactor.

It catalyses the reaction N-formyl-L-kynurenine + H2O = L-kynurenine + formate + H(+). The protein operates within amino-acid degradation; L-tryptophan degradation via kynurenine pathway; L-kynurenine from L-tryptophan: step 2/2. Catalyzes the hydrolysis of N-formyl-L-kynurenine to L-kynurenine, the second step in the kynurenine pathway of tryptophan degradation. The polypeptide is Kynurenine formamidase (Burkholderia ambifaria (strain ATCC BAA-244 / DSM 16087 / CCUG 44356 / LMG 19182 / AMMD) (Burkholderia cepacia (strain AMMD))).